The sequence spans 262 residues: (2Z,6E)-farnesyl diphosphate synthase (262 aa).

Aspartate 40 is an active-site residue. Aspartate 40 contributes to the Mg(2+) binding site. Substrate contacts are provided by residues 41 to 44 (GNRR), tryptophan 45, and 86 to 88 (STE). The active-site Proton acceptor is the asparagine 89. Residues arginine 92, arginine 211, and 217 to 219 (RLS) contribute to the substrate site. Residue glutamate 230 coordinates Mg(2+).

Belongs to the UPP synthase family. Z-FPP synthase subfamily. In terms of assembly, homodimer. Mg(2+) is required as a cofactor.

Its subcellular location is the cytoplasm. The protein localises to the cell membrane. The enzyme catalyses isopentenyl diphosphate + (2E)-geranyl diphosphate = (2Z,6E)-farnesyl diphosphate + diphosphate. Its function is as follows. Catalyzes the condensation of only one isopentenyl pyrophosphate (IPP) unit in the cis configuration to E-geranyl diphosphate (E-GPP) generating the 15 carbon product (2Z,6E)-farnesyl diphosphate (Z-FPP or EZ-FPP). Z-FPP is the precursor of decaprenyl diphosphate, which has a central role in the biosynthesis of the mycobacterial cell wall. The protein is (2Z,6E)-farnesyl diphosphate synthase of Mycobacterium tuberculosis (strain CDC 1551 / Oshkosh).